Reading from the N-terminus, the 436-residue chain is Gamma-glutamyl phosphate reductase (436 aa).

This sequence belongs to the gamma-glutamyl phosphate reductase family.

The protein localises to the cytoplasm. The enzyme catalyses L-glutamate 5-semialdehyde + phosphate + NADP(+) = L-glutamyl 5-phosphate + NADPH + H(+). It participates in amino-acid biosynthesis; L-proline biosynthesis; L-glutamate 5-semialdehyde from L-glutamate: step 2/2. Catalyzes the NADPH-dependent reduction of L-glutamate 5-phosphate into L-glutamate 5-semialdehyde and phosphate. The product spontaneously undergoes cyclization to form 1-pyrroline-5-carboxylate. This is Gamma-glutamyl phosphate reductase from Prochlorococcus marinus (strain MIT 9312).